Reading from the N-terminus, the 183-residue chain is Holliday junction branch migration complex subunit RuvA (183 aa).

Positions 1-63 (MTVGLIGVVE…EDAHLLYGFL (63 aa)) are domain I. Residues 64-141 (EESEKILFER…IQDETKPVHN (78 aa)) form a domain II region. A region of interest (flexible linker) is located at residue Asn-141. Positions 141–183 (NEAFLALESLGFKSAEINPILKKLKPNLSVEEAIKEALQQLRS) are domain III.

Belongs to the RuvA family. Homotetramer. Forms an RuvA(8)-RuvB(12)-Holliday junction (HJ) complex. HJ DNA is sandwiched between 2 RuvA tetramers; dsDNA enters through RuvA and exits via RuvB. An RuvB hexamer assembles on each DNA strand where it exits the tetramer. Each RuvB hexamer is contacted by two RuvA subunits (via domain III) on 2 adjacent RuvB subunits; this complex drives branch migration. In the full resolvosome a probable DNA-RuvA(4)-RuvB(12)-RuvC(2) complex forms which resolves the HJ.

It is found in the cytoplasm. In terms of biological role, the RuvA-RuvB-RuvC complex processes Holliday junction (HJ) DNA during genetic recombination and DNA repair, while the RuvA-RuvB complex plays an important role in the rescue of blocked DNA replication forks via replication fork reversal (RFR). RuvA specifically binds to HJ cruciform DNA, conferring on it an open structure. The RuvB hexamer acts as an ATP-dependent pump, pulling dsDNA into and through the RuvAB complex. HJ branch migration allows RuvC to scan DNA until it finds its consensus sequence, where it cleaves and resolves the cruciform DNA. This chain is Holliday junction branch migration complex subunit RuvA, found in Helicobacter acinonychis (strain Sheeba).